Here is a 427-residue protein sequence, read N- to C-terminus: Trigger factor (427 aa).

In terms of domain architecture, PPIase FKBP-type spans 163-248 (GDTVVIDFVG…VHEVKAKEVP (86 aa)).

The protein belongs to the FKBP-type PPIase family. Tig subfamily.

It localises to the cytoplasm. The enzyme catalyses [protein]-peptidylproline (omega=180) = [protein]-peptidylproline (omega=0). Functionally, involved in protein export. Acts as a chaperone by maintaining the newly synthesized protein in an open conformation. Functions as a peptidyl-prolyl cis-trans isomerase. The sequence is that of Trigger factor from Streptococcus equi subsp. zooepidemicus (strain MGCS10565).